A 621-amino-acid chain; its full sequence is MPSADGSSSARPNGTSSRSDQLAWYKSQYEQLEAELADFQASSRELEAELEKDIEASEKRERLLKEKVDSLKYEVEEWKVRLEFTTFIADDGPRANLSLPRQTKYKQSKAEGNSAQNTLQKEITTLRDANRTLQLKLRDIEVANDDYERQARHTTSSLEDLESKYNVAIERAVLLEEEMRAGEQEREKLRIENQRLRDELSDLKIETEIIHEKLRNAELQNSRRRKPISLRSPSTPQTPDLFNRSPASSIVSSPLFSTPTLKTSLMSATATPPSPPISESSSSLRKSMNAMPGFPLQKASASDSSFGSRSLHGSRTQKHNNHSRATSYAFTSNRPTPSVTNRPGLPKPKPKPNENTNKHNNNARSSGLPKSGSLYQIRGLIGKMQKLEERVQSAKSKLPPPSDSPSRTSSRSGSILGESPVASTITARRNSRKRLSGSSFSSSVRDGDSVPSYAPHSRPSFGARTQGDSRPSSRTSYSSHSSVSHSTHPSVTPSTRPESRQSRTKTPLGHYSTNPTTESRRPRSSLSNPSNQNGVVNGMAHIDEDEDLAMHMSLRARISEIRETRLPSISTPTGLKKRTPSGISGIPAPRTLRTSTGFDRLEGDMGPPERKSNITDLGETY.

Polar residues-rich tracts occupy residues 1 to 20 (MPSA…SRSD) and 231 to 263 (RSPS…TLKT). Disordered stretches follow at residues 1-21 (MPSA…RSDQ), 218-372 (ELQN…PKSG), 389-537 (ERVQ…GVVN), and 569-621 (ISTP…GETY). The stretch at 18–219 (RSDQLAWYKS…IHEKLRNAEL (202 aa)) forms a coiled coil. Low complexity-rich tracts occupy residues 264–288 (SLMS…RKSM) and 300–310 (SASDSSFGSRS). The segment covering 323–341 (SRATSYAFTSNRPTPSVTN) has biased composition (polar residues). 3 stretches are compositionally biased toward low complexity: residues 353 to 362 (NENTNKHNNN), 404 to 414 (SPSRTSSRSGS), and 469 to 496 (SRPS…PSTR). Residues 599-613 (DRLEGDMGPPERKSN) are compositionally biased toward basic and acidic residues.

This sequence belongs to the nudE family. In terms of assembly, self-associates. Interacts with nudF.

The protein resides in the cytoplasm. Its subcellular location is the cytoskeleton. In terms of biological role, required for nuclear migration within hyphae during vegetative growth. The sequence is that of Nuclear distribution protein nudE homolog 1 (nde1) from Aspergillus fumigatus (strain ATCC MYA-4609 / CBS 101355 / FGSC A1100 / Af293) (Neosartorya fumigata).